Consider the following 392-residue polypeptide: Phospho-N-acetylmuramoyl-pentapeptide-transferase (392 aa).

Transmembrane regions (helical) follow at residues Ala-29–Arg-49, Thr-76–Leu-96, Phe-100–Trp-120, Tyr-137–Glu-157, Ile-193–Ser-213, Gly-225–Thr-245, Ser-262–Phe-282, Val-289–Ile-309, Ile-314–Val-334, and Gln-369–Leu-389.

The protein belongs to the glycosyltransferase 4 family. MraY subfamily. Mg(2+) serves as cofactor.

The protein localises to the cell inner membrane. The enzyme catalyses UDP-N-acetyl-alpha-D-muramoyl-L-alanyl-gamma-D-glutamyl-meso-2,6-diaminopimeloyl-D-alanyl-D-alanine + di-trans,octa-cis-undecaprenyl phosphate = di-trans,octa-cis-undecaprenyl diphospho-N-acetyl-alpha-D-muramoyl-L-alanyl-D-glutamyl-meso-2,6-diaminopimeloyl-D-alanyl-D-alanine + UMP. Its pathway is cell wall biogenesis; peptidoglycan biosynthesis. Catalyzes the initial step of the lipid cycle reactions in the biosynthesis of the cell wall peptidoglycan: transfers peptidoglycan precursor phospho-MurNAc-pentapeptide from UDP-MurNAc-pentapeptide onto the lipid carrier undecaprenyl phosphate, yielding undecaprenyl-pyrophosphoryl-MurNAc-pentapeptide, known as lipid I. The protein is Phospho-N-acetylmuramoyl-pentapeptide-transferase of Polaromonas sp. (strain JS666 / ATCC BAA-500).